The sequence spans 110 residues: Cell cycle protein GpsB (110 aa).

The stretch at 37 to 63 forms a coiled coil; it reads KDYTVYIALVKELQEENAKLKAKATSA. The tract at residues 59–79 is disordered; the sequence is KATSAPASRPAYASATSEPSH. Positions 60–75 are enriched in low complexity; it reads ATSAPASRPAYASATS.

Belongs to the GpsB family. Forms polymers through the coiled coil domains. Interacts with PBP1, MreC and EzrA.

It is found in the cytoplasm. Divisome component that associates with the complex late in its assembly, after the Z-ring is formed, and is dependent on DivIC and PBP2B for its recruitment to the divisome. Together with EzrA, is a key component of the system that regulates PBP1 localization during cell cycle progression. Its main role could be the removal of PBP1 from the cell pole after pole maturation is completed. Also contributes to the recruitment of PBP1 to the division complex. Not essential for septum formation. This chain is Cell cycle protein GpsB, found in Streptococcus thermophilus (strain CNRZ 1066).